Reading from the N-terminus, the 377-residue chain is Erythronate-4-phosphate dehydrogenase (377 aa).

The substrate site is built by Ser45 and Thr66. NAD(+) contacts are provided by Asp146 and Thr175. Residue Arg208 is part of the active site. Asp232 lines the NAD(+) pocket. Residue Glu237 is part of the active site. The active-site Proton donor is the His254. Gly257 serves as a coordination point for NAD(+). Tyr258 is a substrate binding site.

The protein belongs to the D-isomer specific 2-hydroxyacid dehydrogenase family. PdxB subfamily. As to quaternary structure, homodimer.

It localises to the cytoplasm. It carries out the reaction 4-phospho-D-erythronate + NAD(+) = (R)-3-hydroxy-2-oxo-4-phosphooxybutanoate + NADH + H(+). The protein operates within cofactor biosynthesis; pyridoxine 5'-phosphate biosynthesis; pyridoxine 5'-phosphate from D-erythrose 4-phosphate: step 2/5. Catalyzes the oxidation of erythronate-4-phosphate to 3-hydroxy-2-oxo-4-phosphonooxybutanoate. This chain is Erythronate-4-phosphate dehydrogenase, found in Sodalis glossinidius (strain morsitans).